Reading from the N-terminus, the 361-residue chain is 3-dehydroquinate synthase (361 aa).

Belongs to the archaeal-type DHQ synthase family.

It catalyses the reaction 2-amino-2,3,7-trideoxy-D-lyxo-hept-6-ulosonate + NAD(+) + H2O = 3-dehydroquinate + NH4(+) + NADH + H(+). In terms of biological role, catalyzes the oxidative deamination and cyclization of 2-amino-3,7-dideoxy-D-threo-hept-6-ulosonic acid (ADH) to yield 3-dehydroquinate (DHQ), which is fed into the canonical shikimic pathway of aromatic amino acid biosynthesis. The sequence is that of 3-dehydroquinate synthase from Methanococcus maripaludis (strain DSM 14266 / JCM 13030 / NBRC 101832 / S2 / LL).